A 97-amino-acid chain; its full sequence is Serine protease inhibitor Kazal-type 14 (97 aa).

The N-terminal stretch at 1–21 (MAKSFPVFSLLSFILIHLVLS) is a signal peptide. In terms of domain architecture, Kazal-like spans 34-97 (GIIKVKCPYE…RIRFYHDGKC (64 aa)). 3 disulfide bridges follow: cysteine 40/cysteine 79, cysteine 57/cysteine 76, and cysteine 65/cysteine 97. An N-linked (GlcNAc...) asparagine glycan is attached at asparagine 51.

Its subcellular location is the secreted. Functionally, may be a serine protease inhibitor. This chain is Serine protease inhibitor Kazal-type 14 (SPINK14), found in Homo sapiens (Human).